Here is a 144-residue protein sequence, read N- to C-terminus: uncharacterized protein (144 aa).

A disordered region spans residues 98–127 (PLADGATVDSQASENGEKEAQPTPPKEGLL).

This is an uncharacterized protein from Aedes vexans (Inland floodwater mosquito).